A 433-amino-acid polypeptide reads, in one-letter code: Serine/threonine-protein kinase DCLK1 (433 aa).

Positions 1-74 are disordered; the sequence is MLELIEVNGT…GEEESDEGFQ (74 aa). Residues Ser-23, Ser-25, Ser-27, Ser-30, Ser-40, Ser-45, Ser-46, Ser-48, Ser-57, and Ser-69 each carry the phosphoserine modification. Low complexity predominate over residues 40 to 57; the sequence is SQHGGSSTSLSSTKVCSS. Over residues 59-71 the composition is skewed to acidic residues; it reads DENDGPGEEESDE. Residues 83–340 form the Protein kinase domain; the sequence is YKVGRTIGDG…AVQVLEHPWV (258 aa). ATP contacts are provided by residues 89–97 and Lys-112; that span reads IGDGNFAVV. The Proton acceptor role is filled by Asp-204. A Phosphotyrosine modification is found at Tyr-213. Basic and acidic residues predominate over residues 388 to 400; it reads QVFRRRRNQDVRG. The segment at 388–433 is disordered; that stretch reads QVFRRRRNQDVRGRYKAQPAPPELNSESEDYSPSSSETVRSPNSPF. Phosphoserine is present on residues Ser-419, Ser-428, and Ser-431.

The protein belongs to the protein kinase superfamily. CAMK Ser/Thr protein kinase family. CaMK subfamily.

It carries out the reaction L-seryl-[protein] + ATP = O-phospho-L-seryl-[protein] + ADP + H(+). It catalyses the reaction L-threonyl-[protein] + ATP = O-phospho-L-threonyl-[protein] + ADP + H(+). Its function is as follows. Probable kinase that may be involved in a calcium-signaling pathway controlling neuronal migration in the developing brain. May also participate in functions of the mature nervous system. The polypeptide is Serine/threonine-protein kinase DCLK1 (Dclk1) (Rattus norvegicus (Rat)).